The sequence spans 206 residues: Probable GTP-binding protein EngB (206 aa).

An EngB-type G domain is found at 25 to 198 (SRAEVAFAGR…AVRIEGWLAP (174 aa)). Mg(2+) is bound by residues Ser40 and Thr62.

The protein belongs to the TRAFAC class TrmE-Era-EngA-EngB-Septin-like GTPase superfamily. EngB GTPase family. It depends on Mg(2+) as a cofactor.

Necessary for normal cell division and for the maintenance of normal septation. In Thiobacillus denitrificans (strain ATCC 25259 / T1), this protein is Probable GTP-binding protein EngB.